A 274-amino-acid polypeptide reads, in one-letter code: tRNA-cytidine(32) 2-sulfurtransferase (274 aa).

The short motif at 40-45 (SGGKDS) is the PP-loop motif element. [4Fe-4S] cluster contacts are provided by cysteine 115, cysteine 118, and cysteine 206.

This sequence belongs to the TtcA family. As to quaternary structure, homodimer. Mg(2+) serves as cofactor. [4Fe-4S] cluster is required as a cofactor.

The protein localises to the cytoplasm. It catalyses the reaction cytidine(32) in tRNA + S-sulfanyl-L-cysteinyl-[cysteine desulfurase] + AH2 + ATP = 2-thiocytidine(32) in tRNA + L-cysteinyl-[cysteine desulfurase] + A + AMP + diphosphate + H(+). It participates in tRNA modification. In terms of biological role, catalyzes the ATP-dependent 2-thiolation of cytidine in position 32 of tRNA, to form 2-thiocytidine (s(2)C32). The sulfur atoms are provided by the cysteine/cysteine desulfurase (IscS) system. The sequence is that of tRNA-cytidine(32) 2-sulfurtransferase from Pseudomonas entomophila (strain L48).